A 265-amino-acid polypeptide reads, in one-letter code: Indole-3-glycerol phosphate synthase (265 aa).

Belongs to the TrpC family.

It carries out the reaction 1-(2-carboxyphenylamino)-1-deoxy-D-ribulose 5-phosphate + H(+) = (1S,2R)-1-C-(indol-3-yl)glycerol 3-phosphate + CO2 + H2O. The protein operates within amino-acid biosynthesis; L-tryptophan biosynthesis; L-tryptophan from chorismate: step 4/5. This Chromobacterium violaceum (strain ATCC 12472 / DSM 30191 / JCM 1249 / CCUG 213 / NBRC 12614 / NCIMB 9131 / NCTC 9757 / MK) protein is Indole-3-glycerol phosphate synthase.